The following is a 246-amino-acid chain: Small ribosomal subunit protein uS2 (246 aa).

This sequence belongs to the universal ribosomal protein uS2 family.

This is Small ribosomal subunit protein uS2 from Pseudomonas paraeruginosa (strain DSM 24068 / PA7) (Pseudomonas aeruginosa (strain PA7)).